The following is a 322-amino-acid chain: tRNA pseudouridine synthase B (322 aa).

Residues 1 to 11 (MRPPRTTELDR) show a composition bias toward basic and acidic residues. A disordered region spans residues 1–22 (MRPPRTTELDRPMTTAASQRPR). Residue D65 is the Nucleophile of the active site.

Belongs to the pseudouridine synthase TruB family. Type 1 subfamily.

The catalysed reaction is uridine(55) in tRNA = pseudouridine(55) in tRNA. In terms of biological role, responsible for synthesis of pseudouridine from uracil-55 in the psi GC loop of transfer RNAs. The polypeptide is tRNA pseudouridine synthase B (Burkholderia lata (strain ATCC 17760 / DSM 23089 / LMG 22485 / NCIMB 9086 / R18194 / 383)).